Reading from the N-terminus, the 288-residue chain is Ribosomal RNA small subunit methyltransferase A (288 aa).

Asn-18, Leu-20, Gly-45, Glu-66, Asp-91, and Asn-118 together coordinate S-adenosyl-L-methionine.

Belongs to the class I-like SAM-binding methyltransferase superfamily. rRNA adenine N(6)-methyltransferase family. RsmA subfamily.

The protein localises to the cytoplasm. The catalysed reaction is adenosine(1518)/adenosine(1519) in 16S rRNA + 4 S-adenosyl-L-methionine = N(6)-dimethyladenosine(1518)/N(6)-dimethyladenosine(1519) in 16S rRNA + 4 S-adenosyl-L-homocysteine + 4 H(+). Functionally, specifically dimethylates two adjacent adenosines (A1518 and A1519) in the loop of a conserved hairpin near the 3'-end of 16S rRNA in the 30S particle. May play a critical role in biogenesis of 30S subunits. The protein is Ribosomal RNA small subunit methyltransferase A of Mannheimia succiniciproducens (strain KCTC 0769BP / MBEL55E).